The primary structure comprises 79 residues: Sulfur carrier protein TusA (79 aa).

Residue cysteine 15 is the Cysteine persulfide intermediate of the active site.

It belongs to the sulfur carrier protein TusA family. In terms of assembly, interacts with IscS.

It localises to the cytoplasm. It functions in the pathway tRNA modification. Its function is as follows. Sulfur carrier protein involved in sulfur trafficking in the cell. Part of a sulfur-relay system required for 2-thiolation during synthesis of 2-thiouridine of the modified wobble base 5-methylaminomethyl-2-thiouridine (mnm(5)s(2)U) in tRNA. Interacts with IscS and stimulates its cysteine desulfurase activity. Accepts an activated sulfur from IscS, which is then transferred to TusD, and thus determines the direction of sulfur flow from IscS to 2-thiouridine formation. Also appears to be involved in sulfur transfer for the biosynthesis of molybdopterin. The chain is Sulfur carrier protein TusA from Buchnera aphidicola subsp. Baizongia pistaciae (strain Bp).